The sequence spans 284 residues: 4-diphosphocytidyl-2-C-methyl-D-erythritol kinase (284 aa).

The active site involves Lys-14. An ATP-binding site is contributed by Pro-97–Ser-107. The active site involves Asp-139.

Belongs to the GHMP kinase family. IspE subfamily.

The catalysed reaction is 4-CDP-2-C-methyl-D-erythritol + ATP = 4-CDP-2-C-methyl-D-erythritol 2-phosphate + ADP + H(+). It participates in isoprenoid biosynthesis; isopentenyl diphosphate biosynthesis via DXP pathway; isopentenyl diphosphate from 1-deoxy-D-xylulose 5-phosphate: step 3/6. Its function is as follows. Catalyzes the phosphorylation of the position 2 hydroxy group of 4-diphosphocytidyl-2C-methyl-D-erythritol. This chain is 4-diphosphocytidyl-2-C-methyl-D-erythritol kinase, found in Psychromonas ingrahamii (strain DSM 17664 / CCUG 51855 / 37).